Consider the following 446-residue polypeptide: MAQLTALDAGFLKSRDPERHPGLAIGAVAVVNGAAPSYDQLKTVLTERIKSIPRCTQVLATEWIDYPGFDLTQHVRRVALPRPGDEAELFRAIALALERPLDPDRPLWECWIIEGLNGNRWAILIKIHHCMAGAMSAAHLLARLCDDADGSAFANNVDIKQIPPYGDARSWAETLWRMSVSIAGAVCTAAARAVSWPAVTSPAGPVTTRRRYQAVRVPRDAVDAVCHKFGVTANDVALAAITEGFRTVLLHRGQQPRADSLRTLEKTDGSSAMLPYLPVEYDDPVRRLRTVHNRSQQSGRRQPDSLSDYTPLMLCAKMIHALARLPQQGIVTLATSAPRPRHQLRLMGQKMDQVLPIPPTALQLSTGIAVLSYGDELVFGITADYDAASEMQQLVNGIELGMARLVALSDDSVLLFTKDRRKASSRALPSAARRGRPSVPTARARH.

Residue His129 is the Proton acceptor of the active site. The segment at 425 to 446 is disordered; it reads SRALPSAARRGRPSVPTARARH.

The protein belongs to the long-chain O-acyltransferase family.

The enzyme catalyses an acyl-CoA + a 1,2-diacyl-sn-glycerol = a triacyl-sn-glycerol + CoA. It participates in glycerolipid metabolism; triacylglycerol biosynthesis. The protein is Putative diacyglycerol O-acyltransferase MT3481 of Mycobacterium tuberculosis (strain CDC 1551 / Oshkosh).